A 575-amino-acid polypeptide reads, in one-letter code: TOX high mobility group box family member 3 (575 aa).

Disordered stretches follow at residues 189-258 (LGGA…QKPV) and 516-575 (QQLQ…VSIF). Positions 195–214 (SHTSPSPPASKSATPSPSSS) are enriched in low complexity. Residues 222-238 (DANRAIGEKRTAPDSGK) show a composition bias toward basic and acidic residues. Positions 239–249 (KPKTPKKKKKK) are enriched in basic residues. Positions 254–322 (PQKPVSAYAL…EYLKALAAYR (69 aa)) form a DNA-binding region, HMG box. Low complexity predominate over residues 516–526 (QQLQHMQHQSQ). Polar residues predominate over residues 527–541 (PSPRQHSPVTSQITS). Over residues 548 to 575 (SPQPASQQHQPQIQSQTQTQVLPQVSIF) the composition is skewed to low complexity.

Homodimer. Interacts (via HGM box) with CITED1 (via C-terminus); the interaction increases estrogen-response element (ERE)-dependent transcription and protection against cell death. Interacts with CREB1 (phosphorylated form). Interacts with CREB1; the interaction is not depolarization dependent. Interacts with CREBBP (via C-terminus).

It is found in the nucleus. In terms of biological role, transcriptional coactivator of the p300/CBP-mediated transcription complex. Activates transactivation through cAMP response element (CRE) sites. Protects against cell death by inducing antiapoptotic and repressing pro-apoptotic transcripts. Stimulates transcription from the estrogen-responsive or BCL-2 promoters. Required for depolarization-induced transcription activation of the C-FOS promoter in neurons. Associates with chromatin to the estrogen-responsive C3 promoter region. The polypeptide is TOX high mobility group box family member 3 (Tox3) (Mus musculus (Mouse)).